We begin with the raw amino-acid sequence, 247 residues long: Type III pantothenate kinase (247 aa).

6-13 contacts ATP; the sequence is DVGNTHTT. 101–104 provides a ligand contact to substrate; the sequence is GADR. The active-site Proton acceptor is the Asp-103. K(+) is bound at residue Asp-123. Residue Thr-126 participates in ATP binding. Thr-177 is a binding site for substrate.

This sequence belongs to the type III pantothenate kinase family. In terms of assembly, homodimer. NH4(+) serves as cofactor. The cofactor is K(+).

It localises to the cytoplasm. The catalysed reaction is (R)-pantothenate + ATP = (R)-4'-phosphopantothenate + ADP + H(+). Its pathway is cofactor biosynthesis; coenzyme A biosynthesis; CoA from (R)-pantothenate: step 1/5. Its function is as follows. Catalyzes the phosphorylation of pantothenate (Pan), the first step in CoA biosynthesis. The protein is Type III pantothenate kinase of Thermosipho melanesiensis (strain DSM 12029 / CIP 104789 / BI429).